The following is a 214-amino-acid chain: Cytochrome b (214 aa).

4 consecutive transmembrane segments (helical) span residues 31 to 51 (FGSM…FLAI), 75 to 96 (WIMQ…YIHI), 111 to 131 (WLSG…GYVL), and 176 to 196 (FFAL…LHIL). Heme b contacts are provided by His81 and His95. The heme b site is built by His180 and His194. His199 contacts a ubiquinone.

This sequence belongs to the cytochrome b family. As to quaternary structure, the cytochrome bc1 complex contains 3 respiratory subunits (MT-CYB, CYC1 and UQCRFS1), 2 core proteins (UQCRC1 and UQCRC2) and probably 6 low-molecular weight proteins. The cofactor is heme b.

The protein localises to the mitochondrion inner membrane. In terms of biological role, component of the ubiquinol-cytochrome c reductase complex (complex III or cytochrome b-c1 complex) that is part of the mitochondrial respiratory chain. The b-c1 complex mediates electron transfer from ubiquinol to cytochrome c. Contributes to the generation of a proton gradient across the mitochondrial membrane that is then used for ATP synthesis. The sequence is that of Cytochrome b (MT-CYB) from Crotalus atrox (Western diamondback rattlesnake).